The chain runs to 586 residues: Acetylcholinesterase (586 aa).

The N-terminal stretch at 1-21 (MNLLVTSSLGVLLHLVVLCQA) is a signal peptide. Residue asparagine 80 is glycosylated (N-linked (GlcNAc...) asparagine). A disulfide bridge connects residues cysteine 88 and cysteine 115. Serine 221 acts as the Acyl-ester intermediate in catalysis. Cysteines 275 and 286 form a disulfide. Glutamate 348 acts as the Charge relay system in catalysis. Cysteines 423 and 542 form a disulfide. A glycan (N-linked (GlcNAc...) asparagine) is linked at asparagine 437. Histidine 461 (charge relay system) is an active-site residue. N-linked (GlcNAc...) asparagine glycosylation is found at asparagine 478 and asparagine 554. Residue serine 564 is the site of GPI-anchor amidated serine attachment. Residues 565 to 586 (SGTSSSKGIIFYVLFSILYLIF) constitute a propeptide, removed in mature form.

It belongs to the type-B carboxylesterase/lipase family. As to quaternary structure, isoform H form is a homodimer; the asymmetric form is a disulfide-bonded oligomer composed of a collagenic subunit (Q) and a variable number of T catalytic subunits. Post-translationally, an interchain disulfide bond is present in what becomes position 593 of the T isoform. Found in the synapses and to a lower extent in extrajunctional areas of muscle and nerve, and on erythrocyte membranes.

It is found in the cell membrane. Its subcellular location is the synapse. The catalysed reaction is acetylcholine + H2O = choline + acetate + H(+). Inhibited by substrate concentrations above 0.5 mM. Functionally, terminates signal transduction at the neuromuscular junction by rapid hydrolysis of the acetylcholine released into the synaptic cleft. May be involved in cell-cell interactions. This Tetronarce californica (Pacific electric ray) protein is Acetylcholinesterase (ache).